The chain runs to 474 residues: Gamma-aminobutyric acid receptor subunit beta-1 (474 aa).

Positions 1–25 (MWTVQNRESLGLLSFPVMVAMVCCA) are cleaved as a signal peptide. Topologically, residues 26 to 245 (HSSNEPSNMS…SFRLKRNIGY (220 aa)) are extracellular. N-linked (GlcNAc...) asparagine glycosylation is found at N33 and N105. A histamine-binding site is contributed by Y122. A disulfide bridge links C161 with C175. The N-linked (GlcNAc...) asparagine glycan is linked to N174. Histamine contacts are provided by residues 181–182 (SY) and T227. Y182 and T227 together coordinate 4-aminobutanoate. The next 3 helical transmembrane spans lie at 246 to 267 (FILQ…SFWI), 271 to 293 (ASAA…STHL), and 305 to 327 (AIDI…YAFV). Over 328-451 (NYIFFGKGPQ…DLTDVNSIDK (124 aa)) the chain is Cytoplasmic. The chain crosses the membrane as a helical span at residues 452–473 (WSRMFFPITFSLFNVVYWLYYV).

Belongs to the ligand-gated ion channel (TC 1.A.9) family. Gamma-aminobutyric acid receptor (TC 1.A.9.5) subfamily. GABRB1 sub-subfamily. As to quaternary structure, heteropentamer, formed by a combination of alpha (GABRA1-6), beta (GABRB1-3), gamma (GABRG1-3), delta (GABRD), epsilon (GABRE), rho (GABRR1-3), pi (GABRP) and theta (GABRQ) chains, each subunit exhibiting distinct physiological and pharmacological properties. Binds UBQLN1.

Its subcellular location is the postsynaptic cell membrane. It is found in the cell membrane. It carries out the reaction chloride(in) = chloride(out). With respect to regulation, potentiated by histamine. Beta subunit of the heteropentameric ligand-gated chloride channel gated by gamma-aminobutyric acid (GABA), a major inhibitory neurotransmitter in the brain. GABA-gated chloride channels, also named GABA(A) receptors (GABAAR), consist of five subunits arranged around a central pore and contain GABA active binding site(s) located at the alpha and beta subunit interface(s). When activated by GABA, GABAARs selectively allow the flow of chloride anions across the cell membrane down their electrochemical gradient. Chloride influx into the postsynaptic neuron following GABAAR opening decreases the neuron ability to generate a new action potential, thereby reducing nerve transmission. Beta-containing GABAARs can simultaneously bind GABA and histamine where histamine binds at the interface of two neighboring beta subunits, which may be involved in the regulation of sleep and wakefulness. This Rattus norvegicus (Rat) protein is Gamma-aminobutyric acid receptor subunit beta-1.